The sequence spans 463 residues: Ammonium transporter 1 (463 aa).

At 1–39 (MVAGEIIKGVAAEITNGSSSSVVQKYLDCANQVAPDPGN) the chain is on the extracellular side. A helical transmembrane segment spans residues 40-60 (TTWVLLSTILVLGMMPALAFF). Residues 61–76 (EAGLLRSKNTLSIITQ) are Cytoplasmic-facing. Residues 77 to 97 (IMSGIVVLTVMWQAFGYSLTF) traverse the membrane as a helical segment. Topologically, residues 98–127 (GPDQKGIIGNLDHAFLINVSYDDCSPNAPN) are extracellular. Residues 128-148 (IPAAAYAFFMMMFANITPLLM) traverse the membrane as a helical segment. Residues 149–160 (TGAFAERVKFKA) are Cytoplasmic-facing. Residues 161–181 (FIALTVAWEIIVFYPVAHWIW) traverse the membrane as a helical segment. Topologically, residues 182 to 194 (GGGWLHKYFGVLD) are extracellular. The helical transmembrane segment at 195–215 (FAGGIVIHTSAGVSALVIALY) threads the bilayer. The Cytoplasmic portion of the chain corresponds to 216–233 (VGRRKDFEKYGGEFPPSN). The helical transmembrane segment at 234–254 (LPLATIGAALLWMGWFGFNAG) threads the bilayer. The Extracellular segment spans residues 255–265 (SALAAGNIATS). A helical transmembrane segment spans residues 266–286 (AVASTQIGGSFSAIVWIILSA). Residues 287–293 (AKGKPNT) are Cytoplasmic-facing. The chain crosses the membrane as a helical span at residues 294–314 (VSVINGVIAGLAGITPASGYI). At 315–316 (NS) the chain is on the extracellular side. The chain crosses the membrane as a helical span at residues 317–337 (QYSIGLGICLGLASYYSVVLL). Residues 338–351 (KHKLHIDDALDVSS) are Cytoplasmic-facing. The chain crosses the membrane as a helical span at residues 352-372 (VHGLTGIIGSLAIGFCAELSV). The Extracellular portion of the chain corresponds to 373–392 (NPNGANGAFYGNPKLIGTQL). A helical transmembrane segment spans residues 393–413 (LGVVSVAVWAAAWTWVLLKII). Over 414–463 (DATIGVKIDESEEELGLDLVEHGEFAYHNISLQGNENHYSSVINSHDFFK) the chain is Cytoplasmic.

The protein belongs to the ammonia transporter channel (TC 1.A.11.2) family.

It localises to the cell membrane. The protein localises to the endosome membrane. Its subcellular location is the lysosome membrane. It is found in the cytoplasmic vesicle. The protein resides in the phagosome membrane. Ammonium transporter that mediates the excretion of ammonium. Controls ammonium homeostasis during growth and development. Ammonium has been shown to function as a morphogen at multiple steps during the development. This Dictyostelium discoideum (Social amoeba) protein is Ammonium transporter 1 (amtA).